The primary structure comprises 33 residues: U-limacoditoxin(13)-As11 (33 aa).

The first 19 residues, 1-19, serve as a signal peptide directing secretion; it reads MFKLLLVLALTMLAQSALA. Residue Phe-32 is modified to Phenylalanine amide.

It belongs to the FARP (FMRFamide related peptide) family. Expressed by the venom secretory cell of the spine. The spine is a cuticular structure containing a single large nucleated venom-secreting cell at its base. It is an independent unit capable of producing, storing and injecting venom. On the back of A.stimulea caterpillars, spines are grouped together by 50 to 100 to form scoli, of which there are eight.

It is found in the secreted. Is toxic when injected into Drosophila melanogaster. Also shows a low anthelmintic activity against the parasitic nematode H.contortus (drug susceptible Kirby isolate). This chain is U-limacoditoxin(13)-As11, found in Acharia stimulea (Saddleback caterpillar moth).